We begin with the raw amino-acid sequence, 143 residues long: Large ribosomal subunit protein uL11 (143 aa).

It belongs to the universal ribosomal protein uL11 family. Part of the ribosomal stalk of the 50S ribosomal subunit. Interacts with L10 and the large rRNA to form the base of the stalk. L10 forms an elongated spine to which L12 dimers bind in a sequential fashion forming a multimeric L10(L12)X complex. One or more lysine residues are methylated.

Its function is as follows. Forms part of the ribosomal stalk which helps the ribosome interact with GTP-bound translation factors. The chain is Large ribosomal subunit protein uL11 from Chromohalobacter salexigens (strain ATCC BAA-138 / DSM 3043 / CIP 106854 / NCIMB 13768 / 1H11).